Consider the following 335-residue polypeptide: Ketol-acid reductoisomerase (NAD(P)(+)) (335 aa).

The 181-residue stretch at 5 to 185 (AKIYTDKDTT…GGTRAGAIET (181 aa)) folds into the KARI N-terminal Rossmann domain. Residues 28–31 (YGSQ), R52, S56, and 86–89 (DMAQ) contribute to the NADP(+) site. Residue H111 is part of the active site. G137 is a binding site for NADP(+). Residues 186 to 331 (TFKEETETDL…RRLKEIIERG (146 aa)) form the KARI C-terminal knotted domain. Positions 194, 198, 230, and 234 each coordinate Mg(2+). Residue S255 coordinates substrate. Residues 301–335 (GSPTLSKGLEEMDKSLEEQTGRRLKEIIERGRPKS) are disordered. Positions 308–335 (GLEEMDKSLEEQTGRRLKEIIERGRPKS) are enriched in basic and acidic residues.

This sequence belongs to the ketol-acid reductoisomerase family. Mg(2+) serves as cofactor.

The catalysed reaction is (2R)-2,3-dihydroxy-3-methylbutanoate + NAD(+) = (2S)-2-acetolactate + NADH + H(+). It carries out the reaction (2R)-2,3-dihydroxy-3-methylbutanoate + NADP(+) = (2S)-2-acetolactate + NADPH + H(+). Its pathway is amino-acid biosynthesis; L-isoleucine biosynthesis; L-isoleucine from 2-oxobutanoate: step 2/4. It participates in amino-acid biosynthesis; L-valine biosynthesis; L-valine from pyruvate: step 2/4. Its function is as follows. Involved in the biosynthesis of branched-chain amino acids (BCAA). Catalyzes an alkyl-migration followed by a ketol-acid reduction of (S)-2-acetolactate (S2AL) to yield (R)-2,3-dihydroxy-isovalerate. In the isomerase reaction, S2AL is rearranged via a Mg-dependent methyl migration to produce 3-hydroxy-3-methyl-2-ketobutyrate (HMKB). In the reductase reaction, this 2-ketoacid undergoes a metal-dependent reduction by NADPH or NADH to yield (R)-2,3-dihydroxy-isovalerate. This Metallosphaera sedula (strain ATCC 51363 / DSM 5348 / JCM 9185 / NBRC 15509 / TH2) protein is Ketol-acid reductoisomerase (NAD(P)(+)).